Consider the following 160-residue polypeptide: Transcription elongation factor GreA (160 aa).

Positions 14–76 (VKKLEEELEY…QLENMLKNAS (63 aa)) form a coiled coil.

This sequence belongs to the GreA/GreB family.

Functionally, necessary for efficient RNA polymerase transcription elongation past template-encoded arresting sites. The arresting sites in DNA have the property of trapping a certain fraction of elongating RNA polymerases that pass through, resulting in locked ternary complexes. Cleavage of the nascent transcript by cleavage factors such as GreA or GreB allows the resumption of elongation from the new 3'terminus. GreA releases sequences of 2 to 3 nucleotides. The protein is Transcription elongation factor GreA of Clostridium botulinum (strain Okra / Type B1).